Reading from the N-terminus, the 1091-residue chain is MPPNIYRLSFFSSLLCFFFIPCFSLDQQGQALLSWKSQLNISGDAFSSWHVADTSPCNWVGVKCNRRGEVSEIQLKGMDLQGSLPVTSLRSLKSLTSLTLSSLNLTGVIPKEIGDFTELELLDLSDNSLSGDIPVEIFRLKKLKTLSLNTNNLEGHIPMEIGNLSGLVELMLFDNKLSGEIPRSIGELKNLQVLRAGGNKNLRGELPWEIGNCENLVMLGLAETSLSGKLPASIGNLKRVQTIAIYTSLLSGPIPDEIGYCTELQNLYLYQNSISGSIPTTIGGLKKLQSLLLWQNNLVGKIPTELGNCPELWLIDFSENLLTGTIPRSFGKLENLQELQLSVNQISGTIPEELTNCTKLTHLEIDNNLITGEIPSLMSNLRSLTMFFAWQNKLTGNIPQSLSQCRELQAIDLSYNSLSGSIPKEIFGLRNLTKLLLLSNDLSGFIPPDIGNCTNLYRLRLNGNRLAGSIPSEIGNLKNLNFVDISENRLVGSIPPAISGCESLEFLDLHTNSLSGSLLGTTLPKSLKFIDFSDNALSSTLPPGIGLLTELTKLNLAKNRLSGEIPREISTCRSLQLLNLGENDFSGEIPDELGQIPSLAISLNLSCNRFVGEIPSRFSDLKNLGVLDVSHNQLTGNLNVLTDLQNLVSLNISYNDFSGDLPNTPFFRRLPLSDLASNRGLYISNAISTRPDPTTRNSSVVRLTILILVVVTAVLVLMAVYTLVRARAAGKQLLGEEIDSWEVTLYQKLDFSIDDIVKNLTSANVIGTGSSGVVYRITIPSGESLAVKKMWSKEESGAFNSEIKTLGSIRHRNIVRLLGWCSNRNLKLLFYDYLPNGSLSSRLHGAGKGGCVDWEARYDVVLGVAHALAYLHHDCLPTIIHGDVKAMNVLLGPHFEPYLADFGLARTISGYPNTGIDLAKPTNRPPMAGSYGYMAPEHASMQRITEKSDVYSYGVVLLEVLTGKHPLDPDLPGGAHLVKWVRDHLAEKKDPSRLLDPRLDGRTDSIMHEMLQTLAVAFLCVSNKANERPLMKDVVAMLTEIRHIDVGRSETEKIKAGGCGSKEPQQFMSNEKIINSHGSSNCSFAFSDDSV.

Positions 1–24 are cleaved as a signal peptide; the sequence is MPPNIYRLSFFSSLLCFFFIPCFS. Topologically, residues 25-703 are extracellular; sequence LDQQGQALLS…TTRNSSVVRL (679 aa). One copy of the LRR 1 repeat lies at 33–56; it reads LSWKSQLNISGDAFSSWHVADTSP. An N-linked (GlcNAc...) asparagine glycan is attached at Asn40. Cys57 and Cys64 form a disulfide bridge. LRR repeat units lie at residues 67–91, 92–115, 116–140, 142–166, 168–188, 190–213, 214–237, 239–261, 262–285, 287–309, 311–332, 333–357, 359–383, 385–405, 406–429, 431–453, 454–477, 478–501, 503–524, 525–548, 549–572, 574–596, 598–620, 621–644, 645–668, and 669–690; these read RGEVSEIQLKGMDLQGSLPVTSLRS, LKSLTSLTLSSLNLTGVIPKEIGD, FTELELLDLSDNSLSGDIPVEIFRL, KLKTLSLNTNNLEGHIPMEIGNLSG, VELMLFDNKLSGEIPRSIGEL, NLQVLRAGGNKNLRGELPWEIGNC, ENLVMLGLAETSLSGKLPASIGNL, RVQTIAIYTSLLSGPIPDEIGYC, TELQNLYLYQNSISGSIPTTIGGL, KLQSLLLWQNNLVGKIPTELGNC, ELWLIDFSENLLTGTIPRSFGK, LENLQELQLSVNQISGTIPEELTNC, KLTHLEIDNNLITGEIPSLMSNLRS, TMFFAWQNKLTGNIPQSLSQC, RELQAIDLSYNSLSGSIPKEIFGL, NLTKLLLLSNDLSGFIPPDIGNC, TNLYRLRLNGNRLAGSIPSEIGNL, KNLNFVDISENRLVGSIPPAISGC, SLEFLDLHTNSLSGSLLGTTLP, KSLKFIDFSDNALSSTLPPGIGLL, TELTKLNLAKNRLSGEIPREISTC, SLQLLNLGENDFSGEIPDELGQI, SLAISLNLSCNRFVGEIPSRFSD, LKNLGVLDVSHNQLTGNLNVLTDL, QNLVSLNISYNDFSGDLPNTPFFR, and RLPLSDLASNRGLYISNAISTR. An N-linked (GlcNAc...) asparagine glycan is attached at Asn104. The N-linked (GlcNAc...) asparagine glycan is linked to Asn163. 5 short sequence motifs (small peptide recognition) span residues 173 to 174, 195 to 198, 218 to 223, Tyr246, and 268 to 270; these read FD, RAGG, MLGLAE, and YLY. 2 consecutive short sequence motifs (small peptide recognition) follow at residues 316 to 319 and 338 to 340; these read DFSE and ELQ. N-linked (GlcNAc...) asparagine glycosylation occurs at Asn356. 2 consecutive short sequence motifs (small peptide recognition) follow at residues 386–390 and 412–415; these read MFFAW and DLSY. Residue Asn431 is glycosylated (N-linked (GlcNAc...) asparagine). The Small peptide recognition signature appears at 434–438; sequence KLLLL. N-linked (GlcNAc...) asparagine glycosylation occurs at Asn452. Residues 458–460 carry the Small peptide recognition motif; it reads RLR. An N-linked (GlcNAc...) asparagine glycan is attached at Asn604. A glycan (N-linked (GlcNAc...) asparagine) is linked at Asn651. Asn697 is a glycosylation site (N-linked (GlcNAc...) asparagine). A helical transmembrane segment spans residues 704–724; sequence TILILVVVTAVLVLMAVYTLV. At 725-1091 the chain is on the cytoplasmic side; the sequence is RARAAGKQLL…CSFAFSDDSV (367 aa). The Protein kinase domain maps to 760-1046; sequence LTSANVIGTG…MLTEIRHIDV (287 aa). Residues 766 to 774 and Lys788 contribute to the ATP site; that span reads IGTGSSGVV. 2 positions are modified to phosphotyrosine: Tyr831 and Tyr870. Catalysis depends on Asp883, which acts as the Proton acceptor. Tyr933 bears the Phosphotyrosine mark.

It belongs to the protein kinase superfamily. Ser/Thr protein kinase family. In terms of assembly, binds to RGF peptides such as RGF1, GLV5/CLEL1/RGF2, GLV7/CLEL3/RGF3, GLV3/RGF4, GLV10/CLEL7/RGF5 and RGF10/CLELN; these interactions trigger the formation of heterodimers with SERK1, SERK2 or BAK1/SERK3 via LRR regions. In terms of processing, phosphorylated and ubiquitinated upon interaction with RGF1, thus leading to activation a subsequent degradation. Autophosphorylated. In terms of tissue distribution, expressed in roots.

It localises to the cell membrane. It catalyses the reaction L-seryl-[protein] + ATP = O-phospho-L-seryl-[protein] + ADP + H(+). It carries out the reaction L-threonyl-[protein] + ATP = O-phospho-L-threonyl-[protein] + ADP + H(+). Together with RGI1, RGI2, RGI4 and RGI5, acts as a receptor of RGF peptides (e.g. RGF1, GLV5/CLEL1/RGF2, GLV7/CLEL3/RGF3, GLV3/RGF4, GLV10/CLEL7/RGF5 and RGF10/CLELN), peptide hormones which maintain the postembryonic root stem cell niche by regulating the expression levels and patterns of the transcription factor PLETHORA (PLT, e.g. PLT1 and PLT2). Links RGF peptides signal with their downstream components. The polypeptide is LRR receptor-like serine/threonine-protein kinase RGI3 (Arabidopsis thaliana (Mouse-ear cress)).